A 114-amino-acid chain; its full sequence is Large ribosomal subunit protein bL20c (114 aa).

This sequence belongs to the bacterial ribosomal protein bL20 family.

It localises to the plastid. The protein localises to the chloroplast. In terms of biological role, binds directly to 23S ribosomal RNA and is necessary for the in vitro assembly process of the 50S ribosomal subunit. It is not involved in the protein synthesizing functions of that subunit. The sequence is that of Large ribosomal subunit protein bL20c (rpl20) from Guillardia theta (Cryptophyte).